The sequence spans 278 residues: Diaminopimelate epimerase (278 aa).

Residues N11 and N75 each coordinate substrate. The active-site Proton donor is C84. Residues 85-86 (GN), N160, N195, and 213-214 (ER) contribute to the substrate site. Residue C222 is the Proton acceptor of the active site. Residue 223-224 (GT) participates in substrate binding.

Belongs to the diaminopimelate epimerase family. Homodimer.

The protein localises to the cytoplasm. The enzyme catalyses (2S,6S)-2,6-diaminopimelate = meso-2,6-diaminopimelate. Its pathway is amino-acid biosynthesis; L-lysine biosynthesis via DAP pathway; DL-2,6-diaminopimelate from LL-2,6-diaminopimelate: step 1/1. Catalyzes the stereoinversion of LL-2,6-diaminopimelate (L,L-DAP) to meso-diaminopimelate (meso-DAP), a precursor of L-lysine and an essential component of the bacterial peptidoglycan. The sequence is that of Diaminopimelate epimerase from Corynebacterium aurimucosum (strain ATCC 700975 / DSM 44827 / CIP 107346 / CN-1) (Corynebacterium nigricans).